Here is a 760-residue protein sequence, read N- to C-terminus: uncharacterized protein (760 aa).

An N-terminal signal peptide occupies residues 1 to 20 (MKFKLFLGSSFFGVATLLIA). The N-palmitoyl cysteine moiety is linked to residue C21. A lipid anchor (S-diacylglycerol cysteine) is attached at C21. Disordered regions lie at residues 221–243 (ENAANGTTEKAEKTVSASSLQLK), 272–315 (AKTN…TSDD), and 705–741 (IKATSKEGEQNQGKKGDGAQNQGKKGDGAQNGKNDKA). Residues 272 to 284 (AKTNGEKGNEKQE) show a composition bias toward basic and acidic residues. Residues 300–312 (KNTSQDKTQNTQT) show a composition bias toward polar residues. Residues 705–721 (IKATSKEGEQNQGKKGD) show a composition bias toward basic and acidic residues.

This sequence belongs to the MG185/MG260 family.

Its subcellular location is the cell membrane. This is an uncharacterized protein from Mycoplasma pneumoniae (strain ATCC 29342 / M129 / Subtype 1) (Mycoplasmoides pneumoniae).